The primary structure comprises 212 residues: MNSQQCVIIGIAGASASGKSLIAKTIFEELCRDLGTNQIGVINEDAYYHDQSHLTMEDRVKTNYDHPKALDHQLLASHLTQLKQGEPVSIPCYSYTEHTRISDTLTMQPKKVIILEGILLLTNPKLRDLMDASVFMDTPLDICFLRRLTRDVAERGRTMESVISQYKRTVRPMFLQFIEPSKQYADIIVPRGGKNRIATDILKARIQHLLAK.

13-20 lines the ATP pocket; that stretch reads GASASGKS.

The protein belongs to the uridine kinase family.

The protein localises to the cytoplasm. The enzyme catalyses uridine + ATP = UMP + ADP + H(+). It carries out the reaction cytidine + ATP = CMP + ADP + H(+). Its pathway is pyrimidine metabolism; CTP biosynthesis via salvage pathway; CTP from cytidine: step 1/3. It participates in pyrimidine metabolism; UMP biosynthesis via salvage pathway; UMP from uridine: step 1/1. This Shewanella frigidimarina (strain NCIMB 400) protein is Uridine kinase.